Here is a 493-residue protein sequence, read N- to C-terminus: Kelch-like protein 42 (493 aa).

In terms of domain architecture, BTB spans 5–77; it reads EMVQIRLEDR…INAGGAREGW (73 aa). 6 Kelch repeats span residues 183-241, 242-289, 291-332, 334-379, 381-436, and 438-487; these read VLVA…ILDN, YLFI…AVNS, LYAI…ECKG, IYVI…SVEE, IYIV…ALHN, and GIYI…SLYL.

Component of the BCR(KLHL42) E3 ubiquitin ligase complex, at least composed of CUL3 and KLHL42. Interacts (via the BTB domain) with CUL3. Interacts (via the kelch domains) with KATNA1.

Its subcellular location is the cytoplasm. The protein localises to the cytoskeleton. It is found in the spindle. It participates in protein modification; protein ubiquitination. Substrate-specific adapter of a BCR (BTB-CUL3-RBX1) E3 ubiquitin-protein ligase complex required for mitotic progression and cytokinesis. The BCR(KLHL42) E3 ubiquitin ligase complex mediates the ubiquitination and subsequent degradation of KATNA1. Involved in microtubule dynamics throughout mitosis. This chain is Kelch-like protein 42 (Klhl42), found in Mus musculus (Mouse).